A 1185-amino-acid polypeptide reads, in one-letter code: Liprin-alpha-4 (1185 aa).

2 coiled-coil regions span residues 24–123 (ANFE…CLVS) and 165–499 (DEKV…GRGG). Disordered stretches follow at residues 638 to 709 (SASP…RTLR) and 721 to 757 (EEGK…KSSI). The residue at position 640 (serine 640) is a Phosphoserine. The segment covering 645–656 (GRSTPKLTSRSA) has biased composition (polar residues). Serine 681 carries the post-translational modification Phosphoserine. The span at 684-695 (SREENREDKATI) shows a compositional bias: basic and acidic residues. The segment covering 729–742 (DQGSNPSSSNSSQD) has biased composition (low complexity). SAM domains follow at residues 829–895 (WDGP…MVSL), 944–1008 (NHEW…LKRL), and 1032–1101 (WTND…LLAL).

It belongs to the liprin family. Liprin-alpha subfamily. In terms of assembly, forms homodimers and heterodimers with liprins-alpha and liprins-beta. Interacts with the second PTPase domain of PTPRD, PTPRF and PTPRS. Interacts with RIMS1 and RIMS2. Interacts with GIT1 and GIT2. Interacts with GRIP1. Interacts with KIF1A. Expressed only in the heart, brain, and skeletal muscle.

The protein localises to the cytoplasm. The protein resides in the cell surface. May regulate the disassembly of focal adhesions. May localize receptor-like tyrosine phosphatases type 2A at specific sites on the plasma membrane, possibly regulating their interaction with the extracellular environment and their association with substrates. This Homo sapiens (Human) protein is Liprin-alpha-4 (PPFIA4).